The chain runs to 445 residues: Phosphoglucosamine mutase (445 aa).

S102 (phosphoserine intermediate) is an active-site residue. Mg(2+)-binding residues include S102, D241, D243, and D245. S102 bears the Phosphoserine mark.

It belongs to the phosphohexose mutase family. Requires Mg(2+) as cofactor. Activated by phosphorylation.

The enzyme catalyses alpha-D-glucosamine 1-phosphate = D-glucosamine 6-phosphate. Catalyzes the conversion of glucosamine-6-phosphate to glucosamine-1-phosphate. The polypeptide is Phosphoglucosamine mutase (Escherichia fergusonii (strain ATCC 35469 / DSM 13698 / CCUG 18766 / IAM 14443 / JCM 21226 / LMG 7866 / NBRC 102419 / NCTC 12128 / CDC 0568-73)).